The following is a 164-amino-acid chain: MVKLTKRIGGLVLRLAAFGAALAALIVMITSRERASFLAISLEAKYTDMAAFKYFVIANAVVSVYSFLVLFLPKESLLWKFVVVLDLVMTMLLTSSLSAALAVAQVGKKGNANAGWLPICGQVPKFCDQITGALIAGFVALVLYVLLLLYSLHAVVDPFLLQKS.

Topologically, residues 1-7 (MVKLTKR) are cytoplasmic. A helical membrane pass occupies residues 8–28 (IGGLVLRLAAFGAALAALIVM). Residues 29–51 (ITSRERASFLAISLEAKYTDMAA) lie on the Extracellular side of the membrane. Residues 52-72 (FKYFVIANAVVSVYSFLVLFL) form a helical membrane-spanning segment. Residues 73-80 (PKESLLWK) lie on the Cytoplasmic side of the membrane. Residues 81–101 (FVVVLDLVMTMLLTSSLSAAL) form a helical membrane-spanning segment. At 102-129 (AVAQVGKKGNANAGWLPICGQVPKFCDQ) the chain is on the extracellular side. A helical transmembrane segment spans residues 130–150 (ITGALIAGFVALVLYVLLLLY). Residues 151–164 (SLHAVVDPFLLQKS) lie on the Cytoplasmic side of the membrane.

Belongs to the Casparian strip membrane proteins (CASP) family. As to quaternary structure, homodimer and heterodimers. As to expression, expressed in the stele of the root.

The protein resides in the cell membrane. The polypeptide is CASP-like protein 1C1 (Arabidopsis thaliana (Mouse-ear cress)).